Here is a 275-residue protein sequence, read N- to C-terminus: Ribosomal RNA small subunit methyltransferase A (275 aa).

Positions 21, 23, 48, 69, 94, and 115 each coordinate S-adenosyl-L-methionine.

Belongs to the class I-like SAM-binding methyltransferase superfamily. rRNA adenine N(6)-methyltransferase family. RsmA subfamily.

It localises to the cytoplasm. It catalyses the reaction adenosine(1518)/adenosine(1519) in 16S rRNA + 4 S-adenosyl-L-methionine = N(6)-dimethyladenosine(1518)/N(6)-dimethyladenosine(1519) in 16S rRNA + 4 S-adenosyl-L-homocysteine + 4 H(+). In terms of biological role, specifically dimethylates two adjacent adenosines (A1518 and A1519) in the loop of a conserved hairpin near the 3'-end of 16S rRNA in the 30S particle. May play a critical role in biogenesis of 30S subunits. This Clostridium botulinum (strain Loch Maree / Type A3) protein is Ribosomal RNA small subunit methyltransferase A.